Consider the following 96-residue polypeptide: MKFLSALLLIVLLISVVFGNTSGPSSAWATTTTGGTTGSQTSPATHGGHGGNGGNGHSNIDIHADVGLLDTLSVHARVKANVADTVNVKAKARVEA.

The signal sequence occupies residues 1–19 (MKFLSALLLIVLLISVVFG). Asparagine 20 carries N-linked (GlcNAc...) asparagine glycosylation. The span at 27–46 (AWATTTTGGTTGSQTSPATH) shows a compositional bias: low complexity. The segment at 27–58 (AWATTTTGGTTGSQTSPATHGGHGGNGGNGHS) is disordered. Gly residues predominate over residues 47 to 56 (GGHGGNGGNG).

Its subcellular location is the secreted. This is an uncharacterized protein from Dictyostelium discoideum (Social amoeba).